The following is a 270-amino-acid chain: Thiazole synthase (270 aa).

The active-site Schiff-base intermediate with DXP is the Lys111. Residues Gly172, 198–199 (AG), and 220–221 (NT) each bind 1-deoxy-D-xylulose 5-phosphate.

The protein belongs to the ThiG family. As to quaternary structure, homotetramer. Forms heterodimers with either ThiH or ThiS.

The protein resides in the cytoplasm. It catalyses the reaction [ThiS sulfur-carrier protein]-C-terminal-Gly-aminoethanethioate + 2-iminoacetate + 1-deoxy-D-xylulose 5-phosphate = [ThiS sulfur-carrier protein]-C-terminal Gly-Gly + 2-[(2R,5Z)-2-carboxy-4-methylthiazol-5(2H)-ylidene]ethyl phosphate + 2 H2O + H(+). It functions in the pathway cofactor biosynthesis; thiamine diphosphate biosynthesis. Functionally, catalyzes the rearrangement of 1-deoxy-D-xylulose 5-phosphate (DXP) to produce the thiazole phosphate moiety of thiamine. Sulfur is provided by the thiocarboxylate moiety of the carrier protein ThiS. In vitro, sulfur can be provided by H(2)S. This Methylococcus capsulatus (strain ATCC 33009 / NCIMB 11132 / Bath) protein is Thiazole synthase.